Reading from the N-terminus, the 360-residue chain is MTQTLQVKSRINDYPIIFTDDIFQPLNQFLAEKGDVKLLFITDQTVFDLYQPLFRRFQQDYDSYLHIAAPGGQSKSLEEVSRIYDRLIRANFSKKDVIVTVGGGVIGDLGGFVAATFYRGISYVQIPTTLLSQVDSSIGGKVGVHFKGLTNMIGSIYPPNQIIVSAKFLDTLSEREFACGISEMIKIGFIHDRKLFQQLLAFPKDRNQEQLRQMIFQAICHKKRVVEKDEFEGNLRMSLNFGHTLGHAIEALCHHELYRHGEAIAIGMVFEAKLAVQQQLLSQQDLEALQAAFEAYQLPTTLEAKSMTAEALMTVLKTDKKNSGQHIVLILPTTKGYVSFPIAKHDSRLLDWLRSLLDIA.

NAD(+) is bound by residues 104-108 (GVIGD), 128-129 (TT), K141, and 168-171 (FLDT). Zn(2+) contacts are provided by E183, H243, and H260.

The protein belongs to the sugar phosphate cyclases superfamily. Dehydroquinate synthase family. Requires Co(2+) as cofactor. The cofactor is Zn(2+). It depends on NAD(+) as a cofactor.

It localises to the cytoplasm. The catalysed reaction is 7-phospho-2-dehydro-3-deoxy-D-arabino-heptonate = 3-dehydroquinate + phosphate. It functions in the pathway metabolic intermediate biosynthesis; chorismate biosynthesis; chorismate from D-erythrose 4-phosphate and phosphoenolpyruvate: step 2/7. Catalyzes the conversion of 3-deoxy-D-arabino-heptulosonate 7-phosphate (DAHP) to dehydroquinate (DHQ). The chain is 3-dehydroquinate synthase from Streptococcus equi subsp. equi (strain 4047).